Reading from the N-terminus, the 124-residue chain is Large ribosomal subunit protein uL29 (124 aa).

This sequence belongs to the universal ribosomal protein uL29 family.

In Triticum aestivum (Wheat), this protein is Large ribosomal subunit protein uL29 (RPL35).